We begin with the raw amino-acid sequence, 511 residues long: MRVYVDGEPVDVPEEATVRDALEAAGVSVPEDVTIAVFKGEQKVERETDRLRIMLETGDEELSLTVAVEDERMSEVCEELPGASVSWTTRDEVGLGPVDVSDLEFHTRRGVEVPPYTAILILPTNDPSEAYFLITKRRMAVEYICTDIHGRVTAGRELVDELRGGERVTHVEPVVERATERVVSRVTLDDGLEAGDRIITRVEIELEKNAPVSAEHLLNTLEMEEGRLRIKFRTDTFTSIEPRPFYDLPEENVDMRERGVVTVRNRGVDEGVVYVYRRDRTPVESHNVVGRVRRGMELLDVVAEGDRVLVETDPPRVNFVGLTVDEARELAEEFDVELEVNGDGDVVVDQEPRETLNVLKERKVRVEVVPEDEVIEIELYEDDAPRSVEYFRRVTKMLDRPVGRLKVHFAYADLGMIVFEGNEKLGKKLPPENNPKDRVEAGVLGVTNQAKPHAGLIGVRLEDSEEYGPTGETFEGTNVIGRVVEGLGRLREMDQSDMGRTVYVREVRGER.

Belongs to the UPF0288 family.

This is UPF0288 protein MK0796 from Methanopyrus kandleri (strain AV19 / DSM 6324 / JCM 9639 / NBRC 100938).